The primary structure comprises 901 residues: HTH-type transcriptional regulator MalT (901 aa).

39-46 (SPAGYGKT) contributes to the ATP binding site. Residues 829–894 (ELIRTSPLTQ…DAVQHAQQLL (66 aa)) enclose the HTH luxR-type domain. A DNA-binding region (H-T-H motif) is located at residues 853 to 872 (NEQIAGELEVAATTIKTHIR).

It belongs to the MalT family. As to quaternary structure, monomer in solution. Oligomerizes to an active state in the presence of the positive effectors ATP and maltotriose.

Its activity is regulated as follows. Activated by ATP and maltotriose, which are both required for DNA binding. Its function is as follows. Positively regulates the transcription of the maltose regulon whose gene products are responsible for uptake and catabolism of malto-oligosaccharides. Specifically binds to the promoter region of its target genes, recognizing a short DNA motif called the MalT box. In Escherichia coli (strain K12 / MC4100 / BW2952), this protein is HTH-type transcriptional regulator MalT.